Reading from the N-terminus, the 410-residue chain is 23S rRNA (uracil(747)-C(5))-methyltransferase (410 aa).

4 residues coordinate [4Fe-4S] cluster: C61, C67, C70, and C137. Residues Q253, Y279, E300, and D341 each coordinate S-adenosyl-L-methionine. C367 serves as the catalytic Nucleophile.

It belongs to the class I-like SAM-binding methyltransferase superfamily. RNA M5U methyltransferase family.

It carries out the reaction uridine(747) in 23S rRNA + S-adenosyl-L-methionine = 5-methyluridine(747) in 23S rRNA + S-adenosyl-L-homocysteine + H(+). Activated by magnesium ions. In terms of biological role, catalyzes the formation of 5-methyl-uridine at position equivalent to 747 (m5U747) in 23S rRNA (m5U859 in the P.abyssi numbering). The protein is 23S rRNA (uracil(747)-C(5))-methyltransferase of Pyrococcus abyssi (strain GE5 / Orsay).